The primary structure comprises 82 residues: Sec-independent protein translocase protein TatA (82 aa).

Residues 1–21 (MGSLSIWHWLIVGAVVLLVFG) traverse the membrane as a helical segment. The segment at 43-82 (GLSEDEEKAEAKPVGEPSLRSLDHQGAGDPLKTPDARKIG) is disordered.

It belongs to the TatA/E family. In terms of assembly, the Tat system comprises two distinct complexes: a TatABC complex, containing multiple copies of TatA, TatB and TatC subunits, and a separate TatA complex, containing only TatA subunits. Substrates initially bind to the TatABC complex, which probably triggers association of the separate TatA complex to form the active translocon.

Its subcellular location is the cell inner membrane. Its function is as follows. Part of the twin-arginine translocation (Tat) system that transports large folded proteins containing a characteristic twin-arginine motif in their signal peptide across membranes. TatA could form the protein-conducting channel of the Tat system. In Methylocella silvestris (strain DSM 15510 / CIP 108128 / LMG 27833 / NCIMB 13906 / BL2), this protein is Sec-independent protein translocase protein TatA.